A 309-amino-acid polypeptide reads, in one-letter code: Methionyl-tRNA formyltransferase (309 aa).

110–113 (SLLP) serves as a coordination point for (6S)-5,6,7,8-tetrahydrofolate. The segment at 289–309 (KRMAATDWARGSRIEQGERLK) is disordered. Residues 298–309 (RGSRIEQGERLK) are compositionally biased toward basic and acidic residues.

The protein belongs to the Fmt family.

The catalysed reaction is L-methionyl-tRNA(fMet) + (6R)-10-formyltetrahydrofolate = N-formyl-L-methionyl-tRNA(fMet) + (6S)-5,6,7,8-tetrahydrofolate + H(+). In terms of biological role, attaches a formyl group to the free amino group of methionyl-tRNA(fMet). The formyl group appears to play a dual role in the initiator identity of N-formylmethionyl-tRNA by promoting its recognition by IF2 and preventing the misappropriation of this tRNA by the elongation apparatus. In Saccharopolyspora erythraea (strain ATCC 11635 / DSM 40517 / JCM 4748 / NBRC 13426 / NCIMB 8594 / NRRL 2338), this protein is Methionyl-tRNA formyltransferase.